We begin with the raw amino-acid sequence, 89 residues long: Small ribosomal subunit protein uS17 (89 aa).

This sequence belongs to the universal ribosomal protein uS17 family. Part of the 30S ribosomal subunit.

Functionally, one of the primary rRNA binding proteins, it binds specifically to the 5'-end of 16S ribosomal RNA. The sequence is that of Small ribosomal subunit protein uS17 from Bacteroides fragilis (strain ATCC 25285 / DSM 2151 / CCUG 4856 / JCM 11019 / LMG 10263 / NCTC 9343 / Onslow / VPI 2553 / EN-2).